The chain runs to 585 residues: Mitochondrial sodium/calcium exchanger protein (585 aa).

An N-terminal signal peptide occupies residues Met1 to Gly26. Over Thr27–Leu95 the chain is Extracellular. An N-linked (GlcNAc...) asparagine glycan is attached at Asn46. Residues Leu96 to Val116 traverse the membrane as a helical segment. Residues Thr117 to Ala140 lie on the Cytoplasmic side of the membrane. Residues Gly141–Phe161 traverse the membrane as a helical segment. At Ser162 to Gly168 the chain is on the extracellular side. Residues Leu169–Ile189 form a helical membrane-spanning segment. Residues Thr190 to Asp205 lie on the Cytoplasmic side of the membrane. A helical membrane pass occupies residues Ile206–Thr226. At Leu227 to Trp229 the chain is on the extracellular side. A helical transmembrane segment spans residues Ala230–Val250. The Cytoplasmic portion of the chain corresponds to Tyr251–Arg325. Ser258 is modified (phosphoserine; by PKA). A helical membrane pass occupies residues Val326–Asp346. The Extracellular portion of the chain corresponds to Pro347–Cys360. Residues Leu361 to Ile381 form a helical membrane-spanning segment. The Cytoplasmic portion of the chain corresponds to Tyr382–Glu383. The chain crosses the membrane as a helical span at residues Ile384–Val404. The Extracellular segment spans residues Thr405 to Arg416. Residues Leu417–Ala437 form a helical membrane-spanning segment. Residues Thr438–Arg445 lie on the Cytoplasmic side of the membrane. A helical transmembrane segment spans residues Ser446 to Gly466. At Asn467–Cys491 the chain is on the extracellular side. Residues Phe492 to Ile512 form a helical membrane-spanning segment. The Cytoplasmic portion of the chain corresponds to Arg513–Gly525. Residues Leu526–Val546 form a helical membrane-spanning segment. Over Pro547 to Leu559 the chain is Extracellular. The chain crosses the membrane as a helical span at residues Cys560–Ile580. The Cytoplasmic segment spans residues His581–Ala585.

It belongs to the Ca(2+):cation antiporter (CaCA) (TC 2.A.19) family. SLC24A subfamily. Phosphorylation at Ser-258 by PKA prevents calcium overload. As to expression, ubiquitously expressed. Expressed in dental tissues.

The protein localises to the mitochondrion inner membrane. The protein resides in the cell membrane. The catalysed reaction is Ca(2+)(in) + 3 Na(+)(out) = Ca(2+)(out) + 3 Na(+)(in). The enzyme catalyses 3 Li(+)(out) + Ca(2+)(in) = 3 Li(+)(in) + Ca(2+)(out). With respect to regulation, inhibited by the sodium/calcium exchanger inhibitor CGP-37157. Strongly inhibited by zinc. Its function is as follows. Mitochondrial sodium/calcium antiporter that mediates sodium-dependent calcium efflux from mitochondrion, by mediating the exchange of 3 sodium ions per 1 calcium ion. Plays a central role in mitochondrial calcium homeostasis by mediating mitochondrial calcium extrusion: calcium efflux is essential for mitochondrial function and cell survival, notably in cardiomyocytes. Regulates rates of glucose-dependent insulin secretion in pancreatic beta-cells during the first phase of insulin secretion: acts by mediating efflux of calcium from mitochondrion, thereby affecting cytoplasmic calcium responses. Required for store-operated Ca(2+) entry (SOCE) and Ca(2+) release-activated Ca(2+) (CRAC) channel regulation: sodium transport by SLC8B1 leads to promote calcium-shuttling that modulates mitochondrial redox status, thereby regulating SOCE activity. Involved in B-lymphocyte chemotaxis. Able to transport Ca(2+) in exchange of either Li(+) or Na(+), explaining how Li(+) catalyzes Ca(2+) exchange. In contrast to other members of the family its function is independent of K(+). The sequence is that of Mitochondrial sodium/calcium exchanger protein from Mus musculus (Mouse).